The primary structure comprises 438 residues: 23S rRNA (uracil(1939)-C(5))-methyltransferase RlmD (438 aa).

A TRAM domain is found at 8–68; the sequence is KQKTNNVQTI…RQYGHATAKK (61 aa). Positions 81, 87, 90, and 168 each coordinate [4Fe-4S] cluster. Residues Gln-271, Phe-300, Asn-305, Glu-321, Asp-348, and Asp-369 each coordinate S-adenosyl-L-methionine. The Nucleophile role is filled by Cys-395.

Belongs to the class I-like SAM-binding methyltransferase superfamily. RNA M5U methyltransferase family. RlmD subfamily.

The catalysed reaction is uridine(1939) in 23S rRNA + S-adenosyl-L-methionine = 5-methyluridine(1939) in 23S rRNA + S-adenosyl-L-homocysteine + H(+). In terms of biological role, catalyzes the formation of 5-methyl-uridine at position 1939 (m5U1939) in 23S rRNA. In Haemophilus influenzae (strain 86-028NP), this protein is 23S rRNA (uracil(1939)-C(5))-methyltransferase RlmD.